The following is a 462-amino-acid chain: Cysteine--tRNA ligase (462 aa).

Cysteine 29 lines the Zn(2+) pocket. Residues 31 to 41 carry the 'HIGH' region motif; that stretch reads PTVYDHAHIGN. Positions 214, 239, and 243 each coordinate Zn(2+). Positions 272 to 276 match the 'KMSKS' region motif; it reads KMSKS. Lysine 275 is an ATP binding site.

This sequence belongs to the class-I aminoacyl-tRNA synthetase family. In terms of assembly, monomer. Requires Zn(2+) as cofactor.

It localises to the cytoplasm. The enzyme catalyses tRNA(Cys) + L-cysteine + ATP = L-cysteinyl-tRNA(Cys) + AMP + diphosphate. This Xanthobacter autotrophicus (strain ATCC BAA-1158 / Py2) protein is Cysteine--tRNA ligase.